A 221-amino-acid chain; its full sequence is RNA pyrophosphohydrolase (221 aa).

The Nudix hydrolase domain maps to 6-149 (GFRPNVGIVL…KRSVYALALT (144 aa)). Positions 38–59 (GGIDRGETPEQAMFRELHEEVG) match the Nudix box motif.

Belongs to the Nudix hydrolase family. RppH subfamily. A divalent metal cation serves as cofactor.

Its function is as follows. Accelerates the degradation of transcripts by removing pyrophosphate from the 5'-end of triphosphorylated RNA, leading to a more labile monophosphorylated state that can stimulate subsequent ribonuclease cleavage. The protein is RNA pyrophosphohydrolase of Verminephrobacter eiseniae (strain EF01-2).